A 130-amino-acid polypeptide reads, in one-letter code: Small ribosomal subunit protein uS11 (130 aa).

This sequence belongs to the universal ribosomal protein uS11 family. In terms of assembly, part of the 30S ribosomal subunit. Interacts with proteins S7 and S18. Binds to IF-3.

Located on the platform of the 30S subunit, it bridges several disparate RNA helices of the 16S rRNA. Forms part of the Shine-Dalgarno cleft in the 70S ribosome. This chain is Small ribosomal subunit protein uS11, found in Shewanella violacea (strain JCM 10179 / CIP 106290 / LMG 19151 / DSS12).